The following is a 372-amino-acid chain: Inner membrane protein YbiR (372 aa).

The Periplasmic portion of the chain corresponds to 1–13 (MSLPFLRTLQGDR). The next 2 helical transmembrane spans lie at 14–34 (FFQLLILVGIGLSFFVPFAPK) and 35–55 (SWPAAIDWHTIITLSGLMLLT). The Periplasmic segment spans residues 56–85 (KGVELSGYFDVLGRKMVRRFATERRLAMFM). The helical transmembrane segment at 86–106 (VLAAALLSTFLTNDVALFIVV) threads the bilayer. Residues 107 to 122 (PLTITLKRLCEIPVNR) lie on the Cytoplasmic side of the membrane. The chain crosses the membrane as a helical span at residues 123 to 143 (LIIFEALAVNAGSLLTPIGNP). Topologically, residues 144–155 (QNILIWGRSGLS) are periplasmic. Residues 156 to 176 (FAGFIAQMAPLAGAMMLTLLL) form a helical membrane-spanning segment. The Cytoplasmic segment spans residues 177–208 (LCWCCFPGKAMQYHTGVQTPEWKPRLVWSCLG). Residues 209 to 229 (LYIVFLTALEFKQELWGLVIV) form a helical membrane-spanning segment. The Periplasmic portion of the chain corresponds to 230 to 247 (AAGFALLARRVVLSVDWT). The chain crosses the membrane as a helical span at residues 248–268 (LLLVFMAMFIDVHLLTQLPAL). The Cytoplasmic segment spans residues 269-283 (QGVLGNVSHLSEPGL). Residues 284-304 (WLTAIGLSQVISNVPSTILLL) traverse the membrane as a helical segment. Topologically, residues 305–309 (NYVPP) are periplasmic. Residues 310 to 330 (SLLLVWAVNVGGFGLLPGSLA) form a helical membrane-spanning segment. Residues 331–348 (NLIALRMANDRRIWWRFH) are Cytoplasmic-facing. Residues 349–369 (LYSIPMLLWAALVGYVLLVIL) form a helical membrane-spanning segment. Topologically, residues 370–372 (PAN) are periplasmic.

It belongs to the CitM (TC 2.A.11) transporter family.

Its subcellular location is the cell inner membrane. The chain is Inner membrane protein YbiR (ybiR) from Escherichia coli (strain K12).